A 216-amino-acid chain; its full sequence is Large ribosomal subunit protein uL24m (216 aa).

A mitochondrion-targeting transit peptide spans 1-9 (MRLSALLAL). Ser-24 is modified (phosphoserine). A KOW domain is found at 56 to 89 (LFCGDMVEILEGKDAGKQGKVVQVVRQRNWVVLE).

It belongs to the universal ribosomal protein uL24 family. Component of the mitochondrial ribosome large subunit (39S) which comprises a 16S rRNA and about 50 distinct proteins.

The protein localises to the mitochondrion. This Mus musculus (Mouse) protein is Large ribosomal subunit protein uL24m (Mrpl24).